Here is an 896-residue protein sequence, read N- to C-terminus: Protein translocase subunit SecA (896 aa).

Residues Gln-87, 105 to 109 (GEGKT), and Asp-512 each bind ATP. Residues 858 to 886 (RAGGEAEAAKPVVRDEKKVGRNDPCPCGS) are disordered. The span at 869-878 (VVRDEKKVGR) shows a compositional bias: basic and acidic residues. Positions 882, 884, 893, and 894 each coordinate Zn(2+).

This sequence belongs to the SecA family. As to quaternary structure, monomer and homodimer. Part of the essential Sec protein translocation apparatus which comprises SecA, SecYEG and auxiliary proteins SecDF-YajC and YidC. It depends on Zn(2+) as a cofactor.

The protein localises to the cell inner membrane. It localises to the cytoplasm. It catalyses the reaction ATP + H2O + cellular proteinSide 1 = ADP + phosphate + cellular proteinSide 2.. Functionally, part of the Sec protein translocase complex. Interacts with the SecYEG preprotein conducting channel. Has a central role in coupling the hydrolysis of ATP to the transfer of proteins into and across the cell membrane, serving as an ATP-driven molecular motor driving the stepwise translocation of polypeptide chains across the membrane. In Syntrophotalea carbinolica (strain DSM 2380 / NBRC 103641 / GraBd1) (Pelobacter carbinolicus), this protein is Protein translocase subunit SecA.